A 156-amino-acid chain; its full sequence is Small ribosomal subunit protein uS7 (156 aa).

Belongs to the universal ribosomal protein uS7 family. In terms of assembly, part of the 30S ribosomal subunit. Contacts proteins S9 and S11.

In terms of biological role, one of the primary rRNA binding proteins, it binds directly to 16S rRNA where it nucleates assembly of the head domain of the 30S subunit. Is located at the subunit interface close to the decoding center, probably blocks exit of the E-site tRNA. The chain is Small ribosomal subunit protein uS7 from Synechococcus sp. (strain JA-2-3B'a(2-13)) (Cyanobacteria bacterium Yellowstone B-Prime).